A 288-amino-acid chain; its full sequence is Glycine--tRNA ligase alpha subunit (288 aa).

It belongs to the class-II aminoacyl-tRNA synthetase family. In terms of assembly, tetramer of two alpha and two beta subunits.

The protein resides in the cytoplasm. The catalysed reaction is tRNA(Gly) + glycine + ATP = glycyl-tRNA(Gly) + AMP + diphosphate. The polypeptide is Glycine--tRNA ligase alpha subunit (Rickettsia canadensis (strain McKiel)).